A 225-amino-acid chain; its full sequence is Putative amino-acid transporter YggA (225 aa).

5 consecutive transmembrane segments (helical) span residues 1–21, 37–57, 65–85, 116–136, and 150–170; these read MFAT…PIGA, LLTA…GVFG, SPIG…WFGI, LGVT…LGSF, and AVAM…AVVL.

It belongs to the LysE/ArgO transporter (TC 2.A.75) family.

The protein localises to the cell membrane. This Aeromonas hydrophila protein is Putative amino-acid transporter YggA.